The sequence spans 129 residues: Keratin-associated protein 5-6 (129 aa).

6 consecutive repeat copies span residues cysteine 28–proline 31, cysteine 34–proline 37, cysteine 40–proline 43, cysteine 90–proline 93, cysteine 109–proline 112, and cysteine 119–proline 122. The segment at cysteine 28 to proline 112 is 6 X 4 AA repeats of C-C-X-P.

Belongs to the KRTAP type 5 family. Interacts with hair keratins. In terms of tissue distribution, expressed in hair root and not in skin. Expressed also in liver and skeletal muscle.

Its function is as follows. In the hair cortex, hair keratin intermediate filaments are embedded in an interfilamentous matrix, consisting of hair keratin-associated protein (KRTAP), which are essential for the formation of a rigid and resistant hair shaft through their extensive disulfide bond cross-linking with abundant cysteine residues of hair keratins. The matrix proteins include the high-sulfur and high-glycine-tyrosine keratins. This is Keratin-associated protein 5-6 (KRTAP5-6) from Homo sapiens (Human).